The following is a 399-amino-acid chain: Developmentally-regulated G-protein 1 (399 aa).

In terms of domain architecture, OBG-type G spans G63–G288. Residues G69–S76, D115–I119, and N246–D249 each bind GTP. Positions G288–K366 constitute a TGS domain. The interval K367–Q399 is disordered. A compositionally biased stretch (basic and acidic residues) spans I388–Q399.

The protein belongs to the TRAFAC class OBG-HflX-like GTPase superfamily. OBG GTPase family. In terms of tissue distribution, expressed in actively growing tissues and reproductive organs. Mostly expressed in leaves, stems and siliques. Also present in flowers and flower buds, and, to a lower extent, in roots.

The protein localises to the cytoplasmic vesicle. Its subcellular location is the cytoplasm. Functionally, binds GDP and GTP, and has low GTPase activity. May interact with phosphatidic acid (PA). This is Developmentally-regulated G-protein 1 (DRG1) from Arabidopsis thaliana (Mouse-ear cress).